The chain runs to 241 residues: 2-heptyl-1-hydroxyquinolin-4(1H)-one methyltransferase (241 aa).

Belongs to the methyltransferase superfamily. In terms of assembly, monomer.

The protein localises to the cytoplasm. The catalysed reaction is 2-heptyl-1-hydroxy-4(1H)-quinolinone + S-adenosyl-L-methionine = 2-heptyl-1-methoxy-4(1H)-quinolinone + S-adenosyl-L-homocysteine + H(+). In terms of biological role, involved in cellular response to chemical stress and may contribute to resistance toward antimicrobial natural compounds as well as drugs. Catalyzes the methylation and detoxification of the P.aeruginosa toxin 2-heptyl-1-hydroxy-4(1H)-quinolinone (HQNO) to 2-heptyl-1-methoxy-4(1H)-quinolinone (HMOQ). The protein is 2-heptyl-1-hydroxyquinolin-4(1H)-one methyltransferase of Mycobacterium bovis (strain BCG / Pasteur 1173P2).